Consider the following 553-residue polypeptide: Protein PALS2 (553 aa).

2 consecutive L27 domains span residues methionine 1–lysine 48 and leucine 49–proline 107. One can recognise a PDZ domain in the interval isoleucine 129 to tyrosine 208. Residues valine 228–lysine 297 enclose the SH3 domain. The Guanylate kinase-like domain maps to arginine 351–glutamate 538. Residue tyrosine 513 is modified to Phosphotyrosine.

This sequence belongs to the MAGUK family. Interacts with CADM1. Interacts with the LIN7 proteins.

The protein localises to the membrane. This Mus musculus (Mouse) protein is Protein PALS2.